The chain runs to 430 residues: Aspartate--tRNA(Asp/Asn) ligase (430 aa).

An L-aspartate-binding site is contributed by glutamate 168. Residues 190–193 (QLYK) are aspartate. Arginine 212 is an L-aspartate binding site. Residues 212-214 (RAE), 220-222 (RHL), and glutamate 353 contribute to the ATP site. Residues glutamate 353 and serine 356 each coordinate Mg(2+). L-aspartate-binding residues include serine 356 and arginine 360. 401–404 (GAER) serves as a coordination point for ATP.

Belongs to the class-II aminoacyl-tRNA synthetase family. Type 2 subfamily. In terms of assembly, homodimer. The cofactor is Mg(2+).

The protein localises to the cytoplasm. It carries out the reaction tRNA(Asx) + L-aspartate + ATP = L-aspartyl-tRNA(Asx) + AMP + diphosphate. In terms of biological role, aspartyl-tRNA synthetase with relaxed tRNA specificity since it is able to aspartylate not only its cognate tRNA(Asp) but also tRNA(Asn). Reaction proceeds in two steps: L-aspartate is first activated by ATP to form Asp-AMP and then transferred to the acceptor end of tRNA(Asp/Asn). This Archaeoglobus fulgidus (strain ATCC 49558 / DSM 4304 / JCM 9628 / NBRC 100126 / VC-16) protein is Aspartate--tRNA(Asp/Asn) ligase.